We begin with the raw amino-acid sequence, 69 residues long: MKILTIEYASSSLRLSNSVHSGLLSIYLFNSSHLNASTNLGSSFCLHADGTPIVLRTKITSLPLIAASI.

This is an uncharacterized protein from Homo sapiens (Human).